An 804-amino-acid polypeptide reads, in one-letter code: Angiotensin-converting enzyme 2 (804 aa).

Positions 1-17 (MTGSFWLLLSLVAVTAA) are cleaved as a signal peptide. The Extracellular portion of the chain corresponds to 18-739 (QSTTEEQAKT…LGPPYEPPVT (722 aa)). Residues 19–606 (STTEEQAKTF…QNRNSFVGWS (588 aa)) form the Peptidase M2 domain. N-linked (GlcNAc...) asparagine glycosylation is found at asparagine 53 and asparagine 90. Arginine 168 lines the chloride pocket. Arginine 272 is a binding site for substrate. Asparagine 298 carries N-linked (GlcNAc...) asparagine glycosylation. Cysteines 343 and 360 form a disulfide. 344–345 (HP) is a binding site for substrate. Residue histidine 373 participates in Zn(2+) binding. Glutamate 374 acts as the Proton acceptor in catalysis. Residues histidine 377 and glutamate 401 each coordinate Zn(2+). A glycan (N-linked (GlcNAc...) asparagine) is linked at asparagine 431. Tryptophan 476 and lysine 480 together coordinate chloride. The Proton donor role is filled by histidine 504. Residue tyrosine 514 coordinates substrate. Cysteine 529 and cysteine 541 are oxidised to a cystine. Asparagine 545 carries an N-linked (GlcNAc...) asparagine glycan. Residues 613–804 (SDQSIKVRIS…QNIDDVQTSL (192 aa)) enclose the Collectrin-like domain. The interval 651–658 (RKYFSEAR) is essential for cleavage by ADAM17. Asparagine 659 and asparagine 689 each carry an N-linked (GlcNAc...) asparagine glycan. The interval 696-715 (RTEVENAIRLSRDRINDVFQ) is essential for cleavage by TMPRSS11D and TMPRSS2. Residues 740–760 (IWLIIFGVVMGVVVIGIVVLI) traverse the membrane as a helical segment. Residues 761 to 804 (FTGIRNRRKKNQASSEENPYGSVDLNKGENNSGFQNIDDVQTSL) lie on the Cytoplasmic side of the membrane. Positions 771–804 (NQASSEENPYGSVDLNKGENNSGFQNIDDVQTSL) are disordered. The short motif at 777-785 (ENPYGSVDL) is the LIR element. A Phosphotyrosine modification is found at tyrosine 780. The short motif at 780–783 (YGSV) is the Endocytic sorting signal element. An SH2-binding motif is present at residues 780 to 784 (YGSVD). Serine 782 is subject to Phosphoserine. Lysine 787 is covalently cross-linked (Glycyl lysine isopeptide (Lys-Gly) (interchain with G-Cter in ubiquitin)). The span at 788-804 (GENNSGFQNIDDVQTSL) shows a compositional bias: polar residues. Positions 791 to 794 (NSGF) match the PTB motif. A PDZ-binding motif is present at residues 802–804 (TSL).

This sequence belongs to the peptidase M2 family. In terms of assembly, homodimer. Interacts with the catalytically active form of TMPRSS2. Interacts with SLC6A19; this interaction is essential for expression and function of SLC6A19 in intestine. Interacts with ITGA5:ITGB1. Probably interacts (via endocytic sorting signal motif) with AP2M1; the interaction is inhibited by phosphorylation of Tyr-780. Interacts (via PDZ-binding motif) with NHERF1 (via PDZ domains); the interaction may enhance ACE2 membrane residence. Zn(2+) is required as a cofactor. Requires chloride as cofactor. Post-translationally, proteolytic cleavage by ADAM17 generates a secreted form. Also cleaved by serine proteases: TMPRSS2, TMPRSS11D and HPN/TMPRSS1. In terms of processing, phosphorylated. Phosphorylation at Tyr-780 probably inhibits interaction with AP2M1 and enables interactions with proteins containing SH2 domains. Ubiquitinated. Ubiquitinated on Lys-787 via 'Lys-48'-linked ubiquitin. 'Lys-48'-linked deubiquitinated by USP50 on the Lys-787; leading to its stabilization.

Its subcellular location is the secreted. The protein resides in the cell membrane. It is found in the cytoplasm. The protein localises to the cell projection. It localises to the cilium. Its subcellular location is the apical cell membrane. It carries out the reaction angiotensin II + H2O = angiotensin-(1-7) + L-phenylalanine. The enzyme catalyses angiotensin I + H2O = angiotensin-(1-9) + L-leucine. The catalysed reaction is bradykinin(1-8) + H2O = bradykinin(1-7) + L-phenylalanine. It catalyses the reaction neurotensin + H2O = neurotensin-(1-12) + L-leucine. It carries out the reaction kinetensin + H2O = kinetensin-(1-8) + L-leucine. The enzyme catalyses dynorphin A-(1-13) + H2O = dynorphin A-(1-12) + L-lysine. The catalysed reaction is apelin-13 + H2O = apelin-12 + L-phenylalanine. It catalyses the reaction [Pyr1]apelin-13 + H2O = [Pyr1]apelin-12 + L-phenylalanine. It carries out the reaction apelin-17 + H2O = apelin-16 + L-phenylalanine. Essential counter-regulatory carboxypeptidase of the renin-angiotensin hormone system that is a critical regulator of blood volume, systemic vascular resistance, and thus cardiovascular homeostasis. Converts angiotensin I to angiotensin 1-9, a nine-amino acid peptide with anti-hypertrophic effects in cardiomyocytes, and angiotensin II to angiotensin 1-7, which then acts as a beneficial vasodilator and anti-proliferation agent, counterbalancing the actions of the vasoconstrictor angiotensin II. Also removes the C-terminal residue from three other vasoactive peptides, neurotensin, kinetensin, and des-Arg bradykinin, but is not active on bradykinin. Also cleaves other biological peptides, such as apelins, casomorphins and dynorphin A. Plays an important role in amino acid transport by acting as binding partner of amino acid transporter SLC6A19 in intestine, regulating trafficking, expression on the cell surface, and its catalytic activity. This is Angiotensin-converting enzyme 2 (ACE2) from Bos taurus (Bovine).